Here is a 426-residue protein sequence, read N- to C-terminus: CinA-like protein (426 aa).

The protein belongs to the CinA family.

The polypeptide is CinA-like protein (Gloeobacter violaceus (strain ATCC 29082 / PCC 7421)).